Reading from the N-terminus, the 199-residue chain is Large ribosomal subunit protein uL10 (199 aa).

This sequence belongs to the universal ribosomal protein uL10 family. As to quaternary structure, part of the ribosomal stalk of the 50S ribosomal subunit. The N-terminus interacts with L11 and the large rRNA to form the base of the stalk. The C-terminus forms an elongated spine to which L12 dimers bind in a sequential fashion forming a multimeric L10(L12)X complex.

Forms part of the ribosomal stalk, playing a central role in the interaction of the ribosome with GTP-bound translation factors. This is Large ribosomal subunit protein uL10 (rplJ) from Aquifex aeolicus (strain VF5).